The primary structure comprises 249 residues: Exosome complex component Rrp41 (249 aa).

This sequence belongs to the RNase PH family. Rrp41 subfamily. Component of the archaeal exosome complex. Forms a hexameric ring-like arrangement composed of 3 Rrp41-Rrp42 heterodimers. The hexameric ring associates with a trimer of Rrp4 and/or Csl4 subunits.

Its subcellular location is the cytoplasm. Catalytic component of the exosome, which is a complex involved in RNA degradation. Has 3'-&gt;5' exoribonuclease activity. Can also synthesize heteromeric RNA-tails. The protein is Exosome complex component Rrp41 of Thermococcus kodakarensis (strain ATCC BAA-918 / JCM 12380 / KOD1) (Pyrococcus kodakaraensis (strain KOD1)).